The following is a 765-amino-acid chain: Protein PAT1 homolog 1 (765 aa).

Disordered stretches follow at residues 1-98 (MFRF…DERG), 119-147 (GVGS…LAGP), and 210-244 (LPNR…SPPV). Over residues 7–30 (LDDDCTLEEEEGLVEEEDEIDQFN) the composition is skewed to acidic residues. A compositionally biased stretch (basic and acidic residues) spans 45 to 59 (EEHTRLAELDERVRD). The span at 218 to 227 (SRDEGRDLSE) shows a compositional bias: basic and acidic residues. A phosphoserine mark is found at Ser-235 and Ser-236. Positions 235–244 (SSPVIGSPPV) are enriched in low complexity.

This sequence belongs to the PAT1 family. As to quaternary structure, interacts with ribonucleoprotein complex components.

The protein resides in the cytoplasm. The protein localises to the P-body. It is found in the nucleus. It localises to the PML body. Its subcellular location is the nucleus speckle. In terms of biological role, RNA-binding protein involved in deadenylation-dependent decapping of mRNAs, leading to the degradation of mRNAs. Acts as a scaffold protein that connects deadenylation and decapping machinery. Required for cytoplasmic mRNA processing body (P-body) assembly. This Danio rerio (Zebrafish) protein is Protein PAT1 homolog 1 (patl1).